The following is a 522-amino-acid chain: 3'3'-cGAMP-specific phosphodiesterase 2 (522 aa).

The 125-residue stretch at 36-160 (CVLLVDDDEQ…QKLRTLLYSM (125 aa)) folds into the Response regulatory domain. The residue at position 91 (aspartate 91) is a 4-aspartylphosphate. An HD-GYP domain is found at 325–522 (LRETSKELVY…FIAIRASLPD (198 aa)). 2 residues coordinate a divalent metal cation: histidine 382 and aspartate 383. Lysine 386 functions as the Proton donor in the catalytic mechanism. A divalent metal cation contacts are provided by histidine 411, histidine 437, histidine 438, and aspartate 466.

As to quaternary structure, homodimer. Mn(2+) serves as cofactor.

It catalyses the reaction 3',3'-cGAMP + H2O = 5'-pApG-3' + H(+). Its function is as follows. Phosphodiesterase (PDE) that catalyzes the hydrolysis of 3'3'-cyclic GMP-AMP (3'3'-cGAMP), leading to linear 5'-pApG. Counteracts the function of the 3'3'-cGAMP synthase DncV, and is involved in the modulation of intracellular 3'3'-cGAMP levels. Enhances bacterial chemotaxis and inhibits intestinal colonization in vivo. Thus exerts a crucial role in regulating bacterial infectivity through catalyzing 3'3'-cGAMP degradation. Is specific for 3'3'-cGAMP since it cannot degrade other cGAMP linkage isomers (3'2'-, 2'3'-, and 2'2'-cGAMPs). Is also able to hydrolyze c-di-GMP but not c-di-AMP. In Vibrio cholerae serotype O1 (strain ATCC 39315 / El Tor Inaba N16961), this protein is 3'3'-cGAMP-specific phosphodiesterase 2.